We begin with the raw amino-acid sequence, 283 residues long: Pantothenate synthetase (283 aa).

Residue 30 to 37 (MGYLHEGH) coordinates ATP. The active-site Proton donor is the His37. Gln61 contacts (R)-pantoate. Beta-alanine is bound at residue Gln61. 147-150 (GQKD) is an ATP binding site. Gln153 lines the (R)-pantoate pocket. Residues Val176 and 184–187 (MSSR) each bind ATP.

The protein belongs to the pantothenate synthetase family. Homodimer.

It is found in the cytoplasm. It catalyses the reaction (R)-pantoate + beta-alanine + ATP = (R)-pantothenate + AMP + diphosphate + H(+). The protein operates within cofactor biosynthesis; (R)-pantothenate biosynthesis; (R)-pantothenate from (R)-pantoate and beta-alanine: step 1/1. Its function is as follows. Catalyzes the condensation of pantoate with beta-alanine in an ATP-dependent reaction via a pantoyl-adenylate intermediate. The sequence is that of Pantothenate synthetase from Thermoanaerobacter sp. (strain X514).